We begin with the raw amino-acid sequence, 388 residues long: Cobalt-precorrin-5B C(1)-methyltransferase (388 aa).

The protein belongs to the CbiD family.

It carries out the reaction Co-precorrin-5B + S-adenosyl-L-methionine = Co-precorrin-6A + S-adenosyl-L-homocysteine. It participates in cofactor biosynthesis; adenosylcobalamin biosynthesis; cob(II)yrinate a,c-diamide from sirohydrochlorin (anaerobic route): step 6/10. Catalyzes the methylation of C-1 in cobalt-precorrin-5B to form cobalt-precorrin-6A. This chain is Cobalt-precorrin-5B C(1)-methyltransferase, found in Rubrobacter xylanophilus (strain DSM 9941 / JCM 11954 / NBRC 16129 / PRD-1).